The chain runs to 475 residues: Dihydrolipoyl dehydrogenase (475 aa).

Residues 39–47 (EKDAYGGTC), K56, and A118 contribute to the FAD site. C47 and C52 form a disulfide bridge. Residues 186–190 (GGGYI), E209, and 275–278 (AVGR) each bind NAD(+). FAD-binding residues include D318 and A327. Residue H451 is the Proton acceptor of the active site.

The protein belongs to the class-I pyridine nucleotide-disulfide oxidoreductase family. Homodimer. The cofactor is FAD.

It localises to the cytoplasm. The catalysed reaction is N(6)-[(R)-dihydrolipoyl]-L-lysyl-[protein] + NAD(+) = N(6)-[(R)-lipoyl]-L-lysyl-[protein] + NADH + H(+). The protein is Dihydrolipoyl dehydrogenase (lpdA) of Haloferax volcanii (strain ATCC 29605 / DSM 3757 / JCM 8879 / NBRC 14742 / NCIMB 2012 / VKM B-1768 / DS2) (Halobacterium volcanii).